A 309-amino-acid polypeptide reads, in one-letter code: Taste receptor type 2 member 8 (309 aa).

Topologically, residues 1 to 7 (MFSPADN) are extracellular. A helical transmembrane segment spans residues 8–28 (IFIILITGEFILGILGNGYIA). At 29 to 50 (LVNWIDWIKKKKISTVDYILTN) the chain is on the cytoplasmic side. Residues 51-71 (LVIARICLISVMVVNGIVIVL) form a helical membrane-spanning segment. The Extracellular segment spans residues 72 to 82 (NPDVYTKNKQQ). The helical transmembrane segment at 83-103 (IVIFTFWTFANYLNMWITTCL) threads the bilayer. Topologically, residues 104–131 (NVFYFLKIASSSHPLFLWLKWKIDMVVH) are cytoplasmic. The chain crosses the membrane as a helical span at residues 132-152 (WILLGCFAISLLVSLIAAIVL). At 153-184 (SCDYRFHAIAKHKRNITEMFHVSKIPYFEPLT) the chain is on the extracellular side. A glycan (N-linked (GlcNAc...) asparagine) is linked at N167. A helical membrane pass occupies residues 185–205 (LFNLFAIVPFIVSLISFFLLV). Topologically, residues 206–239 (RSLWRHTKQIKLYATGSRDPSTEVHVRAIKTMTS) are cytoplasmic. A helical transmembrane segment spans residues 240–260 (FIFFFFLYYISSILMTFSYLM). The Extracellular portion of the chain corresponds to 261–266 (TKYKLA). Residues 267–287 (VEFGEIAAILYPLGHSLILIV) form a helical membrane-spanning segment. The Cytoplasmic segment spans residues 288 to 309 (LNNKLRQTFVRMLTCRKIACMI).

Belongs to the G-protein coupled receptor T2R family. As to expression, expressed in subsets of taste receptor cells of the tongue and palate epithelium and exclusively in gustducin-positive cells.

The protein resides in the membrane. Receptor that may play a role in the perception of bitterness and is gustducin-linked. May play a role in sensing the chemical composition of the gastrointestinal content. The activity of this receptor may stimulate alpha gustducin, mediate PLC-beta-2 activation and lead to the gating of TRPM5. The polypeptide is Taste receptor type 2 member 8 (TAS2R8) (Homo sapiens (Human)).